Reading from the N-terminus, the 287-residue chain is MERRWVFVLLDVLCVLVAALPCAILTFVNTPYKRGFYCGDDSIRYPYRPDTITHGLMAGVIITATVILVSAGEAYLVYTDRLYSRSDFNNYLAALYKVVGTFLFGAAVSQSLTDLAKYMTGRLRPNFLAVCDPDWSRVNCSAYVQVEVCRGSSANVTESRLSFYSGHSSFGMYCMVFLALYVQARLCWKWARLLRPTVQFFLVAFALYVGYTRVSDHKHHWSDVLVGLLQGALVASLTVRYISDFFKARPPQHCPEEEDLERKPSLSLTLALGETDCNHYGYPVSSS.

The Cytoplasmic portion of the chain corresponds to 1 to 4; the sequence is MERR. Residues 5–25 form a helical membrane-spanning segment; sequence WVFVLLDVLCVLVAALPCAIL. Topologically, residues 26–51 are lumenal; sequence TFVNTPYKRGFYCGDDSIRYPYRPDT. Residues 52-72 form a helical membrane-spanning segment; it reads ITHGLMAGVIITATVILVSAG. Topologically, residues 73–87 are cytoplasmic; that stretch reads EAYLVYTDRLYSRSD. A helical membrane pass occupies residues 88 to 108; it reads FNNYLAALYKVVGTFLFGAAV. Topologically, residues 109 to 161 are lumenal; that stretch reads SQSLTDLAKYMTGRLRPNFLAVCDPDWSRVNCSAYVQVEVCRGSSANVTESRL. Residues 117 to 125 are phosphatase sequence motif I; the sequence is KYMTGRLRP. Asparagine 139 and asparagine 155 each carry an N-linked (GlcNAc...) asparagine glycan. Residues 162 to 182 form a helical membrane-spanning segment; that stretch reads SFYSGHSSFGMYCMVFLALYV. The interval 164-167 is phosphatase sequence motif II; sequence YSGH. Residue histidine 167 is the Proton donors of the active site. Residues 183 to 193 are Cytoplasmic-facing; the sequence is QARLCWKWARL. Residues 194–211 form a helical membrane-spanning segment; that stretch reads LRPTVQFFLVAFALYVGY. The Lumenal portion of the chain corresponds to 212–218; the sequence is TRVSDHK. The tract at residues 212–223 is phosphatase sequence motif III; sequence TRVSDHKHHWSD. Histidine 219 functions as the Nucleophile in the catalytic mechanism. Residues 219–239 traverse the membrane as a helical segment; sequence HHWSDVLVGLLQGALVASLTV. Residues 240–287 are Cytoplasmic-facing; that stretch reads RYISDFFKARPPQHCPEEEDLERKPSLSLTLALGETDCNHYGYPVSSS.

Belongs to the PA-phosphatase related phosphoesterase family. In terms of assembly, forms functional homodimers and homooligomers. Can also form heterooligomers with PLPP1 and PLPP3. N-glycosylated.

It is found in the membrane. It localises to the cell membrane. The protein localises to the early endosome membrane. The protein resides in the endoplasmic reticulum membrane. The catalysed reaction is a 1,2-diacyl-sn-glycero-3-phosphate + H2O = a 1,2-diacyl-sn-glycerol + phosphate. It catalyses the reaction 1,2-dihexadecanoyl-sn-glycero-3-phosphate + H2O = 1,2-dihexadecanoyl-sn-glycerol + phosphate. The enzyme catalyses 1,2-di-(9Z-octadecenoyl)-sn-glycero-3-phosphate + H2O = 1,2-di-(9Z-octadecenoyl)-sn-glycerol + phosphate. It carries out the reaction a monoacyl-sn-glycero-3-phosphate + H2O = a monoacylglycerol + phosphate. The catalysed reaction is (9Z)-octadecenoyl-sn-glycero-3-phosphate + H2O = (9Z-octadecenoyl)-glycerol + phosphate. It catalyses the reaction sphing-4-enine 1-phosphate + H2O = sphing-4-enine + phosphate. The enzyme catalyses an N-acylsphing-4-enine 1-phosphate + H2O = an N-acylsphing-4-enine + phosphate. It carries out the reaction N-(octanoyl)-sphing-4-enine-1-phosphate + H2O = N-octanoylsphing-4-enine + phosphate. The catalysed reaction is N-(9Z-octadecenoyl)-ethanolamine phosphate + H2O = N-(9Z-octadecenoyl) ethanolamine + phosphate. It participates in lipid metabolism; phospholipid metabolism. Magnesium-independent phospholipid phosphatase. Insensitive to N-ethylmaleimide. In terms of biological role, magnesium-independent phospholipid phosphatase that catalyzes the dephosphorylation of a variety of glycerolipid and sphingolipid phosphate esters including phosphatidate/PA, lysophosphatidate/LPA, sphingosine 1-phosphate/S1P and ceramide 1-phosphate/C1P. Has no apparent extracellular phosphatase activity and therefore most probably acts intracellularly. Also acts on N-oleoyl ethanolamine phosphate/N-(9Z-octadecenoyl)-ethanolamine phosphate, a potential physiological compound. Through dephosphorylation of these bioactive lipid mediators produces new bioactive compounds and may regulate signal transduction in different cellular processes. Indirectly regulates, for instance, cell cycle G1/S phase transition through its phospholipid phosphatase activity. The chain is Phospholipid phosphatase 2 from Bos taurus (Bovine).